Here is a 382-residue protein sequence, read N- to C-terminus: MGKREIHFTPVGRQVQRVLEYPLRLENRSPMSYSRRSRYSPSLSPYDKRRGRSVSRSLSRSPTRSVSSDAENPGNSLYVTGLSHRVTERDLEDHFAKEGKVTDVHLVLDPWTRESRGFGFISMKSVGDANRCIRSLDHSVLQGRVITVEKARRRRGRTPTPGKYLGLRTARGRHKSPSYSPRRSVSCSRSRSRSYSSDRGRSYSPSYGRRGRSSSYSPFYRRRRFYSPSRSPSPDDRYNRRRDRSYSPYYRRRDRSRSYSRNCRARDRSPYYMRRYRSRSRSYSPRYRARDRSCSPYYRGRDRSYSPHYQGRDRSYSPESRYYRRHRSVSGSVSPGGRSMSRSISPRKGRKESRSKSRRHDRQSSMCHSRSARSSTSRSVSP.

Low complexity-rich tracts occupy residues 30–45, 54–68, 177–195, and 202–219; these read PMSY…SLSP, VSRS…SVSS, PSYS…SRSY, and SYSP…YSPF. 2 disordered regions span residues 30-76 and 150-382; these read PMSY…PGNS and KARR…SVSP. Positions 288–316 are enriched in basic and acidic residues; the sequence is RARDRSCSPYYRGRDRSYSPHYQGRDRSY. Positions 329 to 343 are enriched in low complexity; the sequence is VSGSVSPGGRSMSRS. A compositionally biased stretch (basic residues) spans 345–361; the sequence is SPRKGRKESRSKSRRHD. Low complexity predominate over residues 364–382; the sequence is SSMCHSRSARSSTSRSVSP.

This sequence belongs to the splicing factor SR family. SR45 subfamily. In terms of assembly, component of the spliceosome. Homodimer. Interacts with PRP38, SCL28, SR45, RNU1 and U2AF35B. Post-translationally, phosphorylated. As to expression, expressed in leaves, stems and roots.

It is found in the nucleus speckle. Probable splicing factor involved in constitutive and/or alternative splicing events. May bridge the 5' and 3' components of the spliceosome. This is Serine/arginine-rich splicing factor SR45a (SR45A) from Arabidopsis thaliana (Mouse-ear cress).